A 123-amino-acid polypeptide reads, in one-letter code: MNAGICVCVLLAALSTSSCLSLPAVSEDGGQSDLGIVMEHTRHTRAAPSSGQLSLLSKAEDDEEPRSSLTELLARIISTKGTYRRSPSPKSKSMGNNHRIKDRDYLGWMDFGRRSAEEYEYSS.

Residues 1-19 form the signal peptide; the sequence is MNAGICVCVLLAALSTSSC. Positions 20 to 103 are excised as a propeptide; sequence LSLPAVSEDG…MGNNHRIKDR (84 aa). The interval 43 to 67 is disordered; the sequence is HTRAAPSSGQLSLLSKAEDDEEPRS. At Tyr105 the chain carries Sulfotyrosine. Phe111 carries the post-translational modification Phenylalanine amide. A propeptide spanning residues 115–123 is cleaved from the precursor; that stretch reads SAEEYEYSS. Tyr119 and Tyr121 each carry sulfotyrosine.

This sequence belongs to the gastrin/cholecystokinin family. The precursor is cleaved by proteases to produce a number of active cholecystokinins. In terms of tissue distribution, expressed in the ovary, kidney, gill, gastrointestinal tract and pituitary. Differentially expressed in the brain in the optic tectum-thalamus, hypothalamus, telencephalon, olfactory bulb and tract, preoptic region and posterior brain region. Expression is strongest in the hypothalamus, where localization is to the posterior ventrolateral region. Expression in the brain is transiently increased 2 hours after feeding. Abundant in the sensory layers of the vagal lobe and along the border of the sensory region of the lobe and the deep fiber laye. Also present in the facial lobe and throughout the glossopharyngeal lobe.

It is found in the secreted. Functionally, this peptide hormone induces gall bladder contraction and the release of pancreatic enzymes in the gut. Induces the secretion of gonadotropin and growth hormone from the pituitary. Suppresses food intake and decreases the expression of preprosomatostatin genes in the forebrain. The protein is Cholecystokinin (cck) of Carassius auratus (Goldfish).